Reading from the N-terminus, the 347-residue chain is Phenylalanine--tRNA ligase alpha subunit (347 aa).

Position 262 (Glu262) interacts with Mg(2+).

It belongs to the class-II aminoacyl-tRNA synthetase family. Phe-tRNA synthetase alpha subunit type 1 subfamily. As to quaternary structure, tetramer of two alpha and two beta subunits. Mg(2+) is required as a cofactor.

The protein resides in the cytoplasm. The enzyme catalyses tRNA(Phe) + L-phenylalanine + ATP = L-phenylalanyl-tRNA(Phe) + AMP + diphosphate + H(+). The protein is Phenylalanine--tRNA ligase alpha subunit of Roseiflexus castenholzii (strain DSM 13941 / HLO8).